Consider the following 556-residue polypeptide: Formate--tetrahydrofolate ligase (556 aa).

Residue threonine 65–threonine 72 participates in ATP binding.

Belongs to the formate--tetrahydrofolate ligase family.

It carries out the reaction (6S)-5,6,7,8-tetrahydrofolate + formate + ATP = (6R)-10-formyltetrahydrofolate + ADP + phosphate. Its pathway is one-carbon metabolism; tetrahydrofolate interconversion. The chain is Formate--tetrahydrofolate ligase from Alkaliphilus oremlandii (strain OhILAs) (Clostridium oremlandii (strain OhILAs)).